Here is a 223-residue protein sequence, read N- to C-terminus: Sigma non-opioid intracellular receptor 1 (223 aa).

Over 1–9 the chain is Lumenal; the sequence is MQWAAGRRW. The tract at residues 2 to 8 is targeting to endoplasmic reticulum-associated lipid droplets; sequence QWAAGRR. A helical membrane pass occupies residues 10–30; that stretch reads AWITLFLTIVAVLIQAVWLWL. Over 31–223 the chain is Cytoplasmic; it reads GTQSFVFQRE…LTTYLFGQDS (193 aa). Residues 99–106 are important for ligand-binding; sequence SLSEYVLL. The tract at residues 177 to 223 is C-terminal hydrophobic region; sequence VIPSTLAFALSDTIFSTQDFLTLFYTLRAYARGLRLELTTYLFGQDS.

The protein belongs to the ERG2 family. As to quaternary structure, homotrimer. Forms a ternary complex with ANK2 and ITPR3. The complex is disrupted by agonists. Interacts with KCNA4. Interacts with KCNA2; cocaine consumption leads to increased interaction. Interacts with RNF112 in an oxidative stress-regulated manner.

Its subcellular location is the nucleus inner membrane. It localises to the nucleus outer membrane. The protein resides in the nucleus envelope. The protein localises to the cytoplasmic vesicle. It is found in the endoplasmic reticulum membrane. Its subcellular location is the membrane. It localises to the lipid droplet. The protein resides in the cell junction. The protein localises to the cell membrane. It is found in the cell projection. Its subcellular location is the growth cone. It localises to the postsynaptic density membrane. Functions in lipid transport from the endoplasmic reticulum and is involved in a wide array of cellular functions probably through regulation of the biogenesis of lipid microdomains at the plasma membrane. Involved in the regulation of different receptors it plays a role in BDNF signaling and EGF signaling. Also regulates ion channels like the potassium channel and could modulate neurotransmitter release. Plays a role in calcium signaling through modulation together with ANK2 of the ITP3R-dependent calcium efflux at the endoplasmic reticulum. Plays a role in several other cell functions including proliferation, survival and death. Originally identified for its ability to bind various psychoactive drugs it is involved in learning processes, memory and mood alteration. Necessary for proper mitochondrial axonal transport in motor neurons, in particular the retrograde movement of mitochondria. Plays a role in protecting cells against oxidative stress-induced cell death via its interaction with RNF112. This chain is Sigma non-opioid intracellular receptor 1 (SIGMAR1), found in Trichosurus vulpecula (Brush-tailed possum).